A 277-amino-acid chain; its full sequence is MIDDGNVLLAFGLTLFAGLATGVGSAIAFFARRTDTRFLAVALGFSAGVMIYVSFVEIFRKAYEVLATQTTEVLASWYTVAAFFSGALLIAVIDKLVPGYENPHEMHTVEEMDMGRAALPQDTKHDFVRLKRAGVLAAVAIGIHNFPEGLAAFSAALSDPALGVAIAVAIAIHNIPEGMAVSVPIYYATGDRRKAFLYSFLSGVSEPIGALVGYVVLRPFFTPMVFGLLFASVAGIMVYISLDQLLPSAEEYGEHHLCILGVFSGMGVMALSLLLFL.

8 helical membrane-spanning segments follow: residues 7–27 (VLLA…GSAI), 38–58 (FLAV…FVEI), 73–93 (VLAS…IAVI), 133–155 (AGVL…AFSA), 165–187 (AIAV…PIYY), 196–216 (FLYS…GYVV), 220–240 (FFTP…MVYI), and 257–277 (LCIL…LLFL). Fe(2+) is bound by residues Asn-145 and Glu-148. Positions 148 and 173 each coordinate Zn(2+). Residues Asn-174, Glu-177, and Glu-206 each coordinate Fe(2+). Glu-177 contributes to the Zn(2+) binding site.

This sequence belongs to the ZIP transporter (TC 2.A.5) family. ZupT subfamily.

The protein resides in the cell inner membrane. It carries out the reaction Zn(2+)(in) = Zn(2+)(out). Mediates zinc uptake. May also transport other divalent cations. This Nitratidesulfovibrio vulgaris (strain ATCC 29579 / DSM 644 / CCUG 34227 / NCIMB 8303 / VKM B-1760 / Hildenborough) (Desulfovibrio vulgaris) protein is Zinc transporter ZupT.